The sequence spans 57 residues: Potassium channel toxin alpha-KTx 1.5 (57 aa).

An N-terminal signal peptide occupies residues 1-20 (MKISFLLLALVICSIGWSEA). Residue Gln21 is modified to Pyrrolidone carboxylic acid. 3 disulfides stabilise this stretch: Cys27–Cys48, Cys33–Cys53, and Cys37–Cys55.

It belongs to the short scorpion toxin superfamily. Potassium channel inhibitor family. Alpha-KTx 01 subfamily. Expressed by the venom gland.

The protein resides in the secreted. Potent blocker of both large-conductance calcium-activated potassium channels (KCa1.1/KCNMA1) and voltage-gated potassium channels (Kv1.3/KCNA3). Has also been shown to moderately inhibit Kv1.2/KCNA2 and weakly inhibit Kv1.1/KCNA1 channels, as well as 5-hydroxytryptamine 3 receptors (HTR3A). The protein is Potassium channel toxin alpha-KTx 1.5 of Olivierus martensii (Manchurian scorpion).